We begin with the raw amino-acid sequence, 612 residues long: Cyclin-dependent kinase 8 (612 aa).

Residues 23–345 (FENSKEIGRG…CEEAMNDIYF (323 aa)) form the Protein kinase domain. ATP contacts are provided by residues 29 to 37 (IGRGTYGLV) and Lys57. Asp155 (proton acceptor) is an active-site residue. Composition is skewed to low complexity over residues 403-455 (QQQM…MGQP), 472-483 (HQMMQQQHQSQH), 543-555 (PQPG…QQRP), 564-573 (QGYMNPQMGM), and 600-612 (NPQQ…QYHR). Disordered stretches follow at residues 403 to 483 (QQQM…QSQH) and 543 to 612 (PQPG…QYHR).

The protein belongs to the protein kinase superfamily. CMGC Ser/Thr protein kinase family. CDC2/CDKX subfamily. As to quaternary structure, component of the Mediator complex. Mg(2+) serves as cofactor.

The protein resides in the nucleus. It carries out the reaction L-seryl-[protein] + ATP = O-phospho-L-seryl-[protein] + ADP + H(+). The enzyme catalyses L-threonyl-[protein] + ATP = O-phospho-L-threonyl-[protein] + ADP + H(+). It catalyses the reaction [DNA-directed RNA polymerase] + ATP = phospho-[DNA-directed RNA polymerase] + ADP + H(+). Component of the Mediator complex, a coactivator involved in regulated gene transcription of nearly all RNA polymerase II-dependent genes. Mediator functions as a bridge to convey information from gene-specific regulatory proteins to the basal RNA polymerase II transcription machinery. Mediator is recruited to promoters by direct interactions with regulatory proteins and serves as a scaffold for the assembly of a functional pre-initiation complex with RNA polymerase II and the general transcription factors. Phosphorylates the CTD (C-terminal domain) of the large subunit of RNA polymerase II (RNAp II), which may inhibit the formation of a transcription initiation complex. The sequence is that of Cyclin-dependent kinase 8 (cdk-8) from Caenorhabditis briggsae.